A 584-amino-acid polypeptide reads, in one-letter code: Cytochrome c oxidase subunit 1 (584 aa).

The segment at 1 to 25 (MTAVAPRVDGHVAPQRPEPTGHARK) is disordered. The helical transmembrane segment at 43–63 (IMYIIMSFSFFFLGGLMALLI) threads the bilayer. H87 lines the Fe(II)-heme a pocket. Transmembrane regions (helical) follow at residues 90–110 (VMLL…VLPL), 122–142 (LNAF…TGFL), 171–191 (MWIV…INML), 214–234 (IFVV…AALG), 259–279 (LFWF…FGIV), and 292–312 (FGYV…MAVW). H265 and Y269 together coordinate Cu cation. The segment at residues 265–269 (HPEVY) is a cross-link (1'-histidyl-3'-tyrosine (His-Tyr)). Residues H314 and H315 each coordinate Cu cation. Helical transmembrane passes span 316-336 (MFVT…LISV) and 360-380 (MIWS…GIML). H398 contacts heme a3. 3 helical membrane-spanning segments follow: residues 399-419 (FHYT…YFWF), 434-454 (IHFW…HWVG), and 477-497 (ISTV…WNVF). Residue H400 coordinates Fe(II)-heme a. A disordered region spans residues 564–584 (HDDINAPELGTAPALASDSSR).

Associates with subunits II, III and IV to form cytochrome c oxidase. The 4 subunit cytochrome c oxidase forms a supercomplex with the menaquinol-cytochrome c reductase complex (cytochrome bc1). Cu(2+) is required as a cofactor. It depends on heme as a cofactor.

It localises to the cell membrane. The enzyme catalyses 4 Fe(II)-[cytochrome c] + O2 + 8 H(+)(in) = 4 Fe(III)-[cytochrome c] + 2 H2O + 4 H(+)(out). It functions in the pathway energy metabolism; oxidative phosphorylation. Its function is as follows. Cytochrome c oxidase is the component of the respiratory chain that catalyzes the reduction of oxygen to water. Subunits 1-3 form the functional core of the enzyme complex. CO I is the catalytic subunit of the enzyme. Electrons originating in cytochrome c are transferred via the copper A center of subunit 2 and heme A of subunit 1 to the bimetallic center formed by heme A3 and copper B. In Corynebacterium glutamicum (strain ATCC 13032 / DSM 20300 / JCM 1318 / BCRC 11384 / CCUG 27702 / LMG 3730 / NBRC 12168 / NCIMB 10025 / NRRL B-2784 / 534), this protein is Cytochrome c oxidase subunit 1 (ctaD).